A 106-amino-acid chain; its full sequence is uncharacterized protein (106 aa).

The next 2 helical transmembrane spans lie at 25-45 and 62-82; these read VMNV…IHYI and ICFL…NFQG.

It is found in the membrane. This is an uncharacterized protein from Saccharomyces cerevisiae (strain ATCC 204508 / S288c) (Baker's yeast).